Here is a 317-residue protein sequence, read N- to C-terminus: MIVVDYITPLMESMKISAYYTIRISIIVLTTVFIVNYIMSTGIMKKLSNMLSPILRRLKVNPLSISSTLACFFSPTVGYSILAEGLKENKVNEREVIGASLANSFPSVLSHTFTFFIPVVVPILGHTGVLYVLIRLGVALAKTIIGFLYLSIISEDYSFEMPEINKLNKKENAKKSFKSTIRFAKRLIPIMFFMMTLVLYLSKIGFFDYVEKFVQPITNLLNLNPNVGILALTEIMNVQAAIVMAGGFLNEGILSSKEVLIGLIIGNVLTFSTRYVKHSLPLHVSLFGAKLGTKIVMVNAAITLLLDIFIIAGLLLI.

A run of 7 helical transmembrane segments spans residues 24–44 (ISII…TGIM), 63–83 (LSIS…SILA), 136–156 (LGVA…ISED), 187–207 (LIPI…IGFF), 229–249 (ILAL…GGFL), 252–272 (GILS…LTFS), and 295–315 (IVMV…AGLL).

It to M.jannaschii MJ0880, MJ1556 and MJ1589.

It is found in the cell membrane. This is an uncharacterized protein from Methanocaldococcus jannaschii (strain ATCC 43067 / DSM 2661 / JAL-1 / JCM 10045 / NBRC 100440) (Methanococcus jannaschii).